The primary structure comprises 549 residues: Cation/acetate symporter ActP (549 aa).

13 helical membrane passes run 33 to 53 (WQAIIMFLIFVVFTLGITYWA), 77 to 97 (LAIAGDYMSAASFLGISALVF), 103 to 123 (GLIYSLGFLVGWPIILFLIAE), 148 to 168 (ILSACGSLVVVALYLIAQMVG), 183 to 203 (IAVVLVGVLMMMYVLFGGMLA), 206 to 226 (WVQIIKAVLLLFGASFMAFMV), 262 to 282 (ISALSLGLGLMFGTAGLPHIL), 303 to 323 (GFMGYFYILTFIIGFGAIMLV), 355 to 375 (LFLGFISAVAFATILAVVAGL), 404 to 424 (VSKITVLILGVIAIILGVLFE), 428 to 448 (IAFMVGLAFAIAASCNFPIIL), 464 to 484 (GGWLGLITAVVLMILGPTIWV), and 493 to 513 (IFPYEYPALFSISVAFLGIWL).

It belongs to the sodium:solute symporter (SSF) (TC 2.A.21) family.

Its subcellular location is the cell inner membrane. Its function is as follows. Transports acetate. The polypeptide is Cation/acetate symporter ActP (Escherichia coli O1:K1 / APEC).